The primary structure comprises 37 residues: Potassium channel toxin alpha-KTx 4.3 (37 aa).

3 disulfide bridges follow: C7–C28, C13–C33, and C17–C35. The interaction with Ca(2+)-activated K(+) channels stretch occupies residues G26 to C33.

As to expression, expressed by the venom gland.

It is found in the secreted. Functionally, blocks reversibly Shaker B potassium-channels. This chain is Potassium channel toxin alpha-KTx 4.3, found in Tityus discrepans (Venezuelan scorpion).